Reading from the N-terminus, the 235-residue chain is Large ribosomal subunit protein uL3 (235 aa).

Belongs to the universal ribosomal protein uL3 family. As to quaternary structure, part of the 50S ribosomal subunit. Forms a cluster with proteins L14 and L19.

One of the primary rRNA binding proteins, it binds directly near the 3'-end of the 23S rRNA, where it nucleates assembly of the 50S subunit. This chain is Large ribosomal subunit protein uL3, found in Frankia casuarinae (strain DSM 45818 / CECT 9043 / HFP020203 / CcI3).